The primary structure comprises 122 residues: Small ribosomal subunit protein uS12c (122 aa).

The protein belongs to the universal ribosomal protein uS12 family. As to quaternary structure, part of the 30S ribosomal subunit.

The protein localises to the plastid. It localises to the chloroplast. With S4 and S5 plays an important role in translational accuracy. Located at the interface of the 30S and 50S subunits. This chain is Small ribosomal subunit protein uS12c (rps12), found in Cyanidioschyzon merolae (strain NIES-3377 / 10D) (Unicellular red alga).